Here is a 1365-residue protein sequence, read N- to C-terminus: Homeotic protein spalt-major (1365 aa).

3 disordered regions span residues 47–194 (SADK…EVTL), 270–298 (QAKQ…EEEE), and 322–363 (LINA…NTHK). 2 stretches are compositionally biased toward low complexity: residues 63–76 (SPLT…SPSR) and 87–99 (EQST…PEQS). Residues 103-117 (HQLENDIKSEAKSEI) show a composition bias toward basic and acidic residues. Over residues 146-157 (PSSPVAEASAEE) the composition is skewed to low complexity. Positions 159–181 (ATERTPEKEKEKDVEVDVEKPDE) are enriched in basic and acidic residues. The segment covering 275–298 (EDTEEDADQEQDQEQETDTYEEEE) has biased composition (acidic residues). Basic and acidic residues predominate over residues 346–363 (HDHESQPNRRPSLDNTHK). 2 consecutive C2H2-type zinc fingers follow at residues 451–473 (HRCR…IRSH) and 479–501 (FKCN…FQRH). 2 disordered regions span residues 508 to 554 (VPMN…ASFP) and 586 to 716 (ELPT…TPGQ). Polar residues predominate over residues 530-539 (MSPTDSSPNH). A compositionally biased stretch (pro residues) spans 540 to 554 (SPAPPPLGSAPASFP). Basic and acidic residues-rich tracts occupy residues 603 to 622 (PQVK…HEQE) and 638 to 662 (VRIK…EPRR). A phosphoserine mark is found at serine 739 and serine 744. The tract at residues 740 to 772 (PEHHSPVRSPAGGALPPGVPPPPHHHPHHMARS) is disordered. C2H2-type zinc fingers lie at residues 824-846 (NQCV…YRTH), 852-874 (FKCR…MAVH), and 884-906 (HQCP…IRLH). Disordered stretches follow at residues 948–1012 (ALPG…RSGD), 1030–1129 (VVNT…ILTS), and 1146–1241 (HHLQ…GARP). A compositionally biased stretch (acidic residues) spans 976–991 (DMDDNMDCGEDYDDDV). Residues 1040 to 1054 (SSASSHGHSVGSTSA) show a composition bias toward low complexity. Residues 1055–1079 (PTSPSVHASSQVIKRSSSPARSEAS) show a composition bias toward polar residues. A phosphoserine mark is found at serine 1076 and serine 1079. 3 stretches are compositionally biased toward low complexity: residues 1085 to 1100 (LTPR…SRSP), 1114 to 1123 (RSPSGSSHAS), and 1146 to 1168 (HHLQ…AAAA). A compositionally biased stretch (basic and acidic residues) spans 1181–1191 (QHQEQLRREAA). The segment covering 1192–1218 (EAQQKAAAAAAAAAAAAAAQRQTPPQA) has biased composition (low complexity). 2 consecutive C2H2-type zinc fingers follow at residues 1289–1311 (TTCG…YRSH) and 1317–1339 (FKCS…MLTH).

It belongs to the sal C2H2-type zinc-finger protein family.

The protein resides in the nucleus. Its function is as follows. Required for the establishment of the posterior-most head and the anterior-most tail segments of the embryo. Probably function as a transcriptional regulator. Could repress the transcription of the tsh gene. The chain is Homeotic protein spalt-major (salm) from Drosophila melanogaster (Fruit fly).